A 398-amino-acid polypeptide reads, in one-letter code: Palmitoyl-[acyl-carrier-protein] 4-desaturase 3, chloroplastic (398 aa).

The N-terminal 29 residues, 1–29 (MALRSLFLPNAFPNASSFRGGSRRGAAPR), are a transit peptide targeting the chloroplast. The Fe cation site is built by glutamate 139, glutamate 177, histidine 180, glutamate 230, glutamate 263, and histidine 266.

Belongs to the fatty acid desaturase type 2 family. As to quaternary structure, homodimer. Fe(2+) serves as cofactor. Preferentially expressed in the flower labellum. Low expression in leaves.

It is found in the plastid. It localises to the chloroplast stroma. The enzyme catalyses hexadecanoyl-[ACP] + 2 reduced [2Fe-2S]-[ferredoxin] + O2 + 2 H(+) = (4Z)-hexadecenoyl-[ACP] + 2 oxidized [2Fe-2S]-[ferredoxin] + 2 H2O. Its pathway is lipid metabolism; fatty acid metabolism. Converts palmitoyl-ACP to (4Z)-hexadec-4-enoyl-ACP by introduction of a cis double bond between carbons 4 and 5 of the acyl chain. The sequence is that of Palmitoyl-[acyl-carrier-protein] 4-desaturase 3, chloroplastic (SAD3) from Ophrys arachnitiformis subsp. archipelagi (Orchid).